The sequence spans 371 residues: tRNA-specific 2-thiouridylase MnmA (371 aa).

ATP is bound by residues 8 to 15 (GMSGGVDS) and M34. The tract at residues 94-96 (NPD) is interaction with target base in tRNA. C99 (nucleophile) is an active-site residue. A disulfide bond links C99 and C195. G123 serves as a coordination point for ATP. Residues 145 to 147 (KDQ) are interaction with tRNA. The active-site Cysteine persulfide intermediate is C195. An interaction with tRNA region spans residues 309-310 (RY).

This sequence belongs to the MnmA/TRMU family.

The protein resides in the cytoplasm. The catalysed reaction is S-sulfanyl-L-cysteinyl-[protein] + uridine(34) in tRNA + AH2 + ATP = 2-thiouridine(34) in tRNA + L-cysteinyl-[protein] + A + AMP + diphosphate + H(+). In terms of biological role, catalyzes the 2-thiolation of uridine at the wobble position (U34) of tRNA, leading to the formation of s(2)U34. This Methylococcus capsulatus (strain ATCC 33009 / NCIMB 11132 / Bath) protein is tRNA-specific 2-thiouridylase MnmA.